A 309-amino-acid polypeptide reads, in one-letter code: ADP-L-glycero-D-manno-heptose-6-epimerase (309 aa).

Residues 10 to 11, 31 to 32, lysine 38, lysine 53, 75 to 79, and asparagine 92 each bind NADP(+); these read MI, DN, and EGACS. The Proton acceptor role is filled by tyrosine 139. Lysine 143 lines the NADP(+) pocket. Substrate is bound at residue asparagine 168. Residues valine 169 and lysine 177 each contribute to the NADP(+) site. Lysine 177 acts as the Proton acceptor in catalysis. Substrate contacts are provided by residues serine 179, histidine 186, 200–203, arginine 208, and tyrosine 271; that span reads FDGS.

The protein belongs to the NAD(P)-dependent epimerase/dehydratase family. HldD subfamily. As to quaternary structure, homopentamer. The cofactor is NADP(+).

It carries out the reaction ADP-D-glycero-beta-D-manno-heptose = ADP-L-glycero-beta-D-manno-heptose. Its pathway is nucleotide-sugar biosynthesis; ADP-L-glycero-beta-D-manno-heptose biosynthesis; ADP-L-glycero-beta-D-manno-heptose from D-glycero-beta-D-manno-heptose 7-phosphate: step 4/4. Catalyzes the interconversion between ADP-D-glycero-beta-D-manno-heptose and ADP-L-glycero-beta-D-manno-heptose via an epimerization at carbon 6 of the heptose. The protein is ADP-L-glycero-D-manno-heptose-6-epimerase of Serratia proteamaculans (strain 568).